Here is a 426-residue protein sequence, read N- to C-terminus: Enolase 1 (426 aa).

Position 162 (glutamine 162) interacts with (2R)-2-phosphoglycerate. The active-site Proton donor is the glutamate 204. Residues aspartate 241, glutamate 284, and aspartate 311 each coordinate Mg(2+). Positions 336, 365, 366, and 387 each coordinate (2R)-2-phosphoglycerate. Lysine 336 functions as the Proton acceptor in the catalytic mechanism.

Belongs to the enolase family. It depends on Mg(2+) as a cofactor.

Its subcellular location is the cytoplasm. It is found in the secreted. The protein resides in the cell surface. It carries out the reaction (2R)-2-phosphoglycerate = phosphoenolpyruvate + H2O. It participates in carbohydrate degradation; glycolysis; pyruvate from D-glyceraldehyde 3-phosphate: step 4/5. Its function is as follows. Catalyzes the reversible conversion of 2-phosphoglycerate (2-PG) into phosphoenolpyruvate (PEP). It is essential for the degradation of carbohydrates via glycolysis. In Methanospirillum hungatei JF-1 (strain ATCC 27890 / DSM 864 / NBRC 100397 / JF-1), this protein is Enolase 1.